The following is a 47-amino-acid chain: Photosystem II reaction center protein Psb30 (47 aa).

The helical transmembrane segment at 19–39 (VIFQLLSVALIVIAGPVVIFL) threads the bilayer.

This sequence belongs to the Psb30/Ycf12 family. As to quaternary structure, PSII is composed of 1 copy each of membrane proteins PsbA, PsbB, PsbC, PsbD, PsbE, PsbF, PsbH, PsbI, PsbJ, PsbK, PsbL, PsbM, PsbT, PsbX, PsbY, PsbZ, Psb30/Ycf12, peripheral proteins PsbO, CyanoQ (PsbQ), PsbU, PsbV and a large number of cofactors. It forms dimeric complexes.

Its subcellular location is the cellular thylakoid membrane. In terms of biological role, a core subunit of photosystem II (PSII), probably helps stabilize the reaction center. In Nostoc punctiforme (strain ATCC 29133 / PCC 73102), this protein is Photosystem II reaction center protein Psb30.